We begin with the raw amino-acid sequence, 78 residues long: Large ribosomal subunit protein bL28 (78 aa).

The segment at 1 to 33 (MARKDDVTGEGPVTGNSVSDSNQKTNRRFKRNL) is disordered. The segment covering 14 to 24 (TGNSVSDSNQK) has biased composition (polar residues).

Belongs to the bacterial ribosomal protein bL28 family.

The chain is Large ribosomal subunit protein bL28 from Salinibacter ruber (strain DSM 13855 / M31).